Consider the following 290-residue polypeptide: UPF0507 protein YML003W (290 aa).

The protein belongs to the UPF0507 family.

In Saccharomyces cerevisiae (strain ATCC 204508 / S288c) (Baker's yeast), this protein is UPF0507 protein YML003W.